The primary structure comprises 217 residues: Gas vesicle protein F2 (217 aa).

The protein belongs to the gas vesicle GvpF/GvpL family. In terms of assembly, binds GvpA.

It localises to the gas vesicle. Its subcellular location is the cytoplasm. Its function is as follows. A minor component of the gas vesicle, may be involved in preventing GvpA aggregation during gas vesicle nucleation. Gas vesicles are hollow, gas filled proteinaceous nanostructures found in several microbial planktonic microorganisms. They allow positioning of halobacteria at the optimal depth for growth in the poorly aerated, shallow brine pools of their habitat. Expression of 2 c-vac DNA fragments containing 2 divergently transcribed regions (gvpE-gvpF-gvpG-gvpH-gvpI-gvpJ-gvpK-gvpL-gvpM and gvpA-gvpC-gvpN-gvpO) allows H.volcanii to produce gas vesicles. Note that gvpD is not necessary for gas vesicle formation. The chain is Gas vesicle protein F2 from Halobacterium salinarum (strain ATCC 700922 / JCM 11081 / NRC-1) (Halobacterium halobium).